The primary structure comprises 485 residues: Chromosomal replication initiator protein DnaA (485 aa).

Residues 1–74 form a domain I, interacts with DnaA modulators region; it reads MEKSKNIWSL…ILTNNGYDNV (74 aa). The tract at residues 74–140 is domain II; the sequence is VTIVFTNQSP…EEEPKNFKNP (67 aa). A domain III, AAA+ region region spans residues 141–357; that stretch reads FLKKRYTFEN…AAVTKLKAYI (217 aa). Residues glycine 185, glycine 187, lysine 188, and threonine 189 each coordinate ATP. Residues 358-485 are domain IV, binds dsDNA; the sequence is DLDNIEIDID…TELMNKIKKN (128 aa).

This sequence belongs to the DnaA family. In terms of assembly, oligomerizes as a right-handed, spiral filament on DNA at oriC.

It is found in the cytoplasm. Functionally, plays an essential role in the initiation and regulation of chromosomal replication. ATP-DnaA binds to the origin of replication (oriC) to initiate formation of the DNA replication initiation complex once per cell cycle. Binds the DnaA box (a 9 base pair repeat at the origin) and separates the double-stranded (ds)DNA. Forms a right-handed helical filament on oriC DNA; dsDNA binds to the exterior of the filament while single-stranded (ss)DNA is stabiized in the filament's interior. The ATP-DnaA-oriC complex binds and stabilizes one strand of the AT-rich DNA unwinding element (DUE), permitting loading of DNA polymerase. After initiation quickly degrades to an ADP-DnaA complex that is not apt for DNA replication. Binds acidic phospholipids. The protein is Chromosomal replication initiator protein DnaA of Borreliella afzelii (strain PKo) (Borrelia afzelii).